Reading from the N-terminus, the 483-residue chain is Glutamyl-tRNA(Gln) amidotransferase subunit A (483 aa).

Residues Lys-75 and Ser-150 each act as charge relay system in the active site. Ser-174 acts as the Acyl-ester intermediate in catalysis.

It belongs to the amidase family. GatA subfamily. In terms of assembly, heterotrimer of A, B and C subunits.

It catalyses the reaction L-glutamyl-tRNA(Gln) + L-glutamine + ATP + H2O = L-glutaminyl-tRNA(Gln) + L-glutamate + ADP + phosphate + H(+). Its function is as follows. Allows the formation of correctly charged Gln-tRNA(Gln) through the transamidation of misacylated Glu-tRNA(Gln) in organisms which lack glutaminyl-tRNA synthetase. The reaction takes place in the presence of glutamine and ATP through an activated gamma-phospho-Glu-tRNA(Gln). This is Glutamyl-tRNA(Gln) amidotransferase subunit A from Deinococcus geothermalis (strain DSM 11300 / CIP 105573 / AG-3a).